The chain runs to 146 residues: Suppressor APC domain-containing protein 1 (146 aa).

Positions 121–146 (HRKGVTQSTGEVVSQAPPGPKGPTLV) are disordered. Residues 137 to 146 (PPGPKGPTLV) show a composition bias toward pro residues.

The protein is Suppressor APC domain-containing protein 1 (Sapcd1) of Mus musculus (Mouse).